The primary structure comprises 387 residues: Proteinase R (387 aa).

Residues 1–21 (MRLSILLGLLPLAPRPPAVDA) form the signal peptide. Positions 22-108 (VEQRSEPAPL…IEQDAIVNIN (87 aa)) are excised as a propeptide. Residues 42 to 107 (KYIVKLKEGS…YIEQDAIVNI (66 aa)) enclose the Inhibitor I9 domain. Positions 115 to 387 (PWGLARISST…NLLAYNNYQG (273 aa)) constitute a Peptidase S8 domain. T124 lines the Ca(2+) pocket. 2 disulfides stabilise this stretch: C142-C231 and C286-C357. Catalysis depends on charge relay system residues D147 and H177. Residue D308 coordinates Ca(2+). S332 serves as the catalytic Charge relay system. A Ca(2+)-binding site is contributed by D368.

This sequence belongs to the peptidase S8 family. Ca(2+) serves as cofactor.

Functionally, serine proteinase. The polypeptide is Proteinase R (PROR) (Parengyodontium album (Tritirachium album)).